Here is a 290-residue protein sequence, read N- to C-terminus: MFKGSIVAIVTPFNNGAVDEKKLRELVDFQIENGTDAIVACGTTGESSTLDNEEHLNVIKIVFDQAKGRVPVIAGTGSNSTAEAIHLTREAKEIGVAGVLLVTPYYNKPTQEGLYLHYTAIADAVEIPQILYNVPGRTGVNLLPETVARLAGHKNIVAIKEATGSLQQASEVMALCGDQIDVFSGDDFITFPMMACGAKGVISVTANIMPKAIGDLTDAFYAGDLEKARQLHLDTLKISNAMFIESNPVPVKTALALMGKCSDEVRLPLAPMSAANKAKLEAIMKEYKLI.

Thr44 contacts pyruvate. Residue Tyr132 is the Proton donor/acceptor of the active site. The active-site Schiff-base intermediate with substrate is the Lys160. Ile202 contacts pyruvate.

It belongs to the DapA family. Homotetramer; dimer of dimers.

The protein localises to the cytoplasm. It carries out the reaction L-aspartate 4-semialdehyde + pyruvate = (2S,4S)-4-hydroxy-2,3,4,5-tetrahydrodipicolinate + H2O + H(+). Its pathway is amino-acid biosynthesis; L-lysine biosynthesis via DAP pathway; (S)-tetrahydrodipicolinate from L-aspartate: step 3/4. Catalyzes the condensation of (S)-aspartate-beta-semialdehyde [(S)-ASA] and pyruvate to 4-hydroxy-tetrahydrodipicolinate (HTPA). The protein is 4-hydroxy-tetrahydrodipicolinate synthase of Trichlorobacter lovleyi (strain ATCC BAA-1151 / DSM 17278 / SZ) (Geobacter lovleyi).